The chain runs to 316 residues: Olfactory receptor class A-like protein 1 (316 aa).

Residues 1–8 are Extracellular-facing; that stretch reads MDLCVTIK. Residues 9-29 traverse the membrane as a helical segment; sequence GVSFLLQAGLGILANALVLLA. Residues 30-39 lie on the Cytoplasmic side of the membrane; the sequence is YAHIRLAEAR. A helical membrane pass occupies residues 40–60; sequence LQPVDAILCHLALVDLLLLLT. At 61–97 the chain is on the extracellular side; the sequence is RGVPQTMTVFGMRNLLDDTGCKVVIYTYRIARALSVC. Residues cysteine 81 and cysteine 169 are joined by a disulfide bond. A helical membrane pass occupies residues 98–118; sequence ITCMLSVFQAVTVAPAAGPLL. The Cytoplasmic portion of the chain corresponds to 119-132; sequence SGVKARLPQLLAPT. The chain crosses the membrane as a helical span at residues 133–153; that stretch reads FAALWFINMAVCIAAPFFSVA. At 154 to 187 the chain is on the extracellular side; that stretch reads PRNGTVPPFTLNLGFCHVDFHDNLSYVLNGVAVS. N-linked (GlcNAc...) asparagine glycans are attached at residues asparagine 156 and asparagine 176. The helical transmembrane segment at 188 to 208 threads the bilayer; that stretch reads VRDFAFVGAMLASSGFILLLL. At 209-233 the chain is on the cytoplasmic side; that stretch reads HRHRRQVRAVRRSQGSTMETRAART. Residues 234–254 traverse the membrane as a helical segment; that stretch reads VLMLVILYSVFFGIDNVIWIY. Over 255-264 the chain is Extracellular; sequence MLTVAQVPPV. Residues 265–285 form a helical membrane-spanning segment; it reads VADMRVFFSSCYASLSPFLII. Over 286–316 the chain is Cytoplasmic; it reads SSNRKLKARMVCATSEQERQAEDGKNSSGKN.

It belongs to the G-protein coupled receptor 1 family. Highly expressed in the olfactory rosette where it localizes to a subset of olfactory sensory neurons, mainly in the apical region of the neuroepithelium. Not detected in other tissues tested.

The protein resides in the cell membrane. Probable pheromone receptor. Shows high specificity for 4-hydroxyphenylacetic acid. Activation of the receptor stimulates intracellular calcium release. The sequence is that of Olfactory receptor class A-like protein 1 from Danio rerio (Zebrafish).